The sequence spans 1327 residues: ABC transporter 1 (1327 aa).

The next 6 helical transmembrane spans lie at 47–67 (LGILAAIASGVPFPLMGIIFG), 100–120 (VYVGIAYFVLVYIYIASWNLF), 170–190 (KVGIVLNSVSFFITAYIIAFV), 195–215 (LGGELVSLTPAYLLMSLVGGY), 228–248 (VAGASSVAMEALSNATIVHAF), and 276–296 (VAVQSGLLYFIAFSANGLAFW). One can recognise an ABC transmembrane type-1 1 domain in the interval 47-326 (LGILAAIASG…TTYTVIFLLV (280 aa)). Asn-381, Asn-390, and Asn-406 each carry an N-linked (GlcNAc...) asparagine glycan. One can recognise an ABC transporter 1 domain in the interval 386–663 (IELNNVSFAF…DGAYAGLVRL (278 aa)). 421–428 (GLSGSGKS) lines the ATP pocket. Asn-463 and Asn-674 each carry an N-linked (GlcNAc...) asparagine glycan. The next 6 helical transmembrane spans lie at 743 to 763 (FLALTSAFVVGGTYSASAVVF), 785 to 805 (FYGLMFFILAIIEFFANLGSW), 859 to 881 (LTGSVVGTIIAILVNLVVAIALS), 888 to 910 (IALVCLAVVPLMLGAGVMRVITM), 971 to 991 (LWLAISYGVSNFLYALAYWWG), and 1005 to 1025 (FFIVLMALLVSAQLWGQMFTL). The ABC transmembrane type-1 2 domain maps to 743 to 1031 (FLALTSAFVV…MFTLAPDVSR (289 aa)). The N-linked (GlcNAc...) asparagine glycan is linked to Asn-1050. The tract at residues 1054 to 1081 (PCQHLKPGNDLEANAEPREKRPDQSQGG) is disordered. The region spanning 1084–1323 (VSLNNVKFSY…SESYKINALH (240 aa)) is the ABC transporter 2 domain. Residue 1119–1126 (GPSGAGKS) participates in ATP binding.

It belongs to the ABC transporter superfamily. ABCB family. Multidrug resistance exporter (TC 3.A.1.201) subfamily.

The protein localises to the membrane. ABC transporter; part of the gene cluster that mediates the biosynthesis of hydroxamate-containing siderophores that play a critical role in virulence via intracellular iron acquisition during macrophage infection. Probably involved in the excretion of the extracellular siderophores. The sequence is that of ABC transporter 1 from Ajellomyces capsulatus (Darling's disease fungus).